We begin with the raw amino-acid sequence, 606 residues long: Acetylcholinesterase (606 aa).

An N-terminal signal peptide occupies residues 1–28 (MPSCQPGKMPAPWPWWLQLLLCIPSCVA). C98 and C125 are oxidised to a cystine. The active-site Acyl-ester intermediate is the S231. A disulfide bond links C285 and C296. N289 is a glycosylation site (N-linked (GlcNAc...) asparagine). E358 acts as the Charge relay system in catalysis. N-linked (GlcNAc...) asparagine glycosylation is present at N374. Residues C433 and C552 are joined by a disulfide bond. H471 serves as the catalytic Charge relay system. An N-linked (GlcNAc...) asparagine glycan is attached at N484.

This sequence belongs to the type-B carboxylesterase/lipase family. In terms of assembly, isoform S is monomeric. Isoform T can form oligomers, including collagen-tailed forms. Post-translationally, the N-terminus is blocked. As to expression, liver and muscle contain both isoform T and isoform S. Venom gland predominantly contains isoform S.

Its subcellular location is the synapse. It localises to the secreted. The protein resides in the cell membrane. It catalyses the reaction acetylcholine + H2O = choline + acetate + H(+). Inhibited by active site inhibitors: edrophonium, trimethyl-(m-acetamidopheny1)-ammonium iodide, and trimethyl-(p-acetarnidopheny1)-ammonium iodide. Inhibited by both active and peripheral site inhibitors: decamethonium, and BW284c51. Inhibited by peripheral site inhibitors: snake acetylcholinesterase fasciculin-2, propidium, gallamine, D-tubocurarine, and tacrine. Also inhibited by antibodies Elec410 and Fab410. In terms of biological role, in muscle, it terminates signal transduction at the neuromuscular junction by rapid hydrolysis of the acetylcholine released into the synaptic cleft. In liver, its function is unclear: it could serve as a safeguard against any diffusion of acetylcholine from synapses into the circulation. In venom, its toxic role is unclear: it could result in less musculatory control by rapidly hydrolyzing acetylcholine, or that it works synergistically with alkaline phosphatase (ALP) in paralyzing prey through hypotension. This chain is Acetylcholinesterase (ACHE), found in Bungarus fasciatus (Banded krait).